The sequence spans 294 residues: 33 kDa chaperonin (294 aa).

Cystine bridges form between cysteine 239-cysteine 241 and cysteine 272-cysteine 275.

The protein belongs to the HSP33 family. In terms of processing, under oxidizing conditions two disulfide bonds are formed involving the reactive cysteines. Under reducing conditions zinc is bound to the reactive cysteines and the protein is inactive.

Its subcellular location is the cytoplasm. Redox regulated molecular chaperone. Protects both thermally unfolding and oxidatively damaged proteins from irreversible aggregation. Plays an important role in the bacterial defense system toward oxidative stress. The polypeptide is 33 kDa chaperonin (Listeria welshimeri serovar 6b (strain ATCC 35897 / DSM 20650 / CCUG 15529 / CIP 8149 / NCTC 11857 / SLCC 5334 / V8)).